The following is a 198-amino-acid chain: MPKIVIWNKVNDLDIFVDCKLNFQKHIEYVSNSAFLKCRQLLRCFRFTNVSLYFKLYNVYVQPLLNYGCEVYNPNSKRLIKLLEMPLKFYSRRVYQRCNVSNTSYDDRLAQSNQKSIQHQRILQILRTYHNILSGEYHFPDVSALKNSSAIPDSFFPKFGPFQLLTQLLPTSNPEYAQVLPNFSNSSVNSLARVLPKP.

This is an uncharacterized protein from Caenorhabditis elegans.